The chain runs to 326 residues: Serpentine receptor class gamma-14 (326 aa).

Transmembrane regions (helical) follow at residues Gln-36–Trp-56, Phe-67–Ile-83, Ile-115–Val-135, Leu-156–Ile-176, Phe-204–Leu-224, Val-243–Phe-263, and Gly-274–Val-294.

This sequence belongs to the nematode receptor-like protein srg family.

It localises to the membrane. The chain is Serpentine receptor class gamma-14 (srg-14) from Caenorhabditis elegans.